Reading from the N-terminus, the 359-residue chain is Peptide chain release factor 1 (359 aa).

Gln-236 bears the N5-methylglutamine mark.

Belongs to the prokaryotic/mitochondrial release factor family. In terms of processing, methylated by PrmC. Methylation increases the termination efficiency of RF1.

It is found in the cytoplasm. Peptide chain release factor 1 directs the termination of translation in response to the peptide chain termination codons UAG and UAA. The sequence is that of Peptide chain release factor 1 (prfA) from Mycoplasma pneumoniae (strain ATCC 29342 / M129 / Subtype 1) (Mycoplasmoides pneumoniae).